We begin with the raw amino-acid sequence, 402 residues long: UDP-glucose 6-dehydrogenase (402 aa).

Residues 2 to 19 (KIAV…GVLL), valine 11, aspartate 29, lysine 34, threonine 83, threonine 118, and glutamate 145 each bind NAD(+). Residues 141–145 (EFLRE), lysine 204, asparagine 208, 249–253 (YNNPS), and glycine 257 contribute to the substrate site. Tyrosine 259 serves as a coordination point for NAD(+). The Nucleophile role is filled by cysteine 260. Lysine 263 serves as a coordination point for NAD(+). Lysine 320 provides a ligand contact to substrate. Residue arginine 327 coordinates NAD(+).

Belongs to the UDP-glucose/GDP-mannose dehydrogenase family.

It catalyses the reaction UDP-alpha-D-glucose + 2 NAD(+) + H2O = UDP-alpha-D-glucuronate + 2 NADH + 3 H(+). Its pathway is nucleotide-sugar biosynthesis; UDP-alpha-D-glucuronate biosynthesis; UDP-alpha-D-glucuronate from UDP-alpha-D-glucose: step 1/1. In terms of biological role, catalyzes the formation of UDP-glucuronic acid which is required for capsular hyaluronic acid synthesis. This is UDP-glucose 6-dehydrogenase (hasB) from Streptococcus pyogenes serotype M3 (strain ATCC BAA-595 / MGAS315).